The sequence spans 127 residues: Small ribosomal subunit protein uS11 (127 aa).

Belongs to the universal ribosomal protein uS11 family. As to quaternary structure, part of the 30S ribosomal subunit. Interacts with proteins S7 and S18. Binds to IF-3.

Its function is as follows. Located on the platform of the 30S subunit, it bridges several disparate RNA helices of the 16S rRNA. Forms part of the Shine-Dalgarno cleft in the 70S ribosome. The chain is Small ribosomal subunit protein uS11 from Chlorobium phaeobacteroides (strain DSM 266 / SMG 266 / 2430).